The primary structure comprises 326 residues: L-lactate dehydrogenase (326 aa).

NAD(+) contacts are provided by residues V20, D41, K46, Y71, and 85–86 (GA). Positions 88 and 94 each coordinate substrate. Residues S107, 124–126 (AAN), and S149 each bind NAD(+). 126 to 129 (NPVD) is a binding site for substrate. 154–157 (DTAR) is a substrate binding site. Residues R159, 171–174 (RSVH), and H174 each bind beta-D-fructose 1,6-bisphosphate. The active-site Proton acceptor is the H181. Y226 bears the Phosphotyrosine mark. Position 235 (T235) interacts with substrate.

This sequence belongs to the LDH/MDH superfamily. LDH family. In terms of assembly, homotetramer.

It localises to the cytoplasm. It catalyses the reaction (S)-lactate + NAD(+) = pyruvate + NADH + H(+). The protein operates within fermentation; pyruvate fermentation to lactate; (S)-lactate from pyruvate: step 1/1. With respect to regulation, allosterically activated by fructose 1,6-bisphosphate (FBP) alone under acidic conditions, while it requires additional activation factors such as divalent cations (Mn(2+)) under neutral conditions. Under acidic conditions, Mn(2+) is an inhibitor in the absence of fructose 1,6-bisphosphate (FBP). In case of L.casei, L-LDH binds four fructose 1,6-bisphosphate (FBP) molecules per tetramer, while usual allosteric L-LDH binds only two fructose 1,6-bisphosphate (FBP) molecules per tetramer. Functionally, catalyzes the conversion of lactate to pyruvate. This chain is L-lactate dehydrogenase, found in Lacticaseibacillus casei (Lactobacillus casei).